The following is a 134-amino-acid chain: Large ribosomal subunit protein eL14z (134 aa).

Belongs to the eukaryotic ribosomal protein eL14 family.

This chain is Large ribosomal subunit protein eL14z (RPL14A), found in Arabidopsis thaliana (Mouse-ear cress).